Reading from the N-terminus, the 151-residue chain is Putative phosphatidylglycerol/phosphatidylinositol transfer protein 3 (151 aa).

An N-terminal signal peptide occupies residues M1–S26.

It belongs to the NPC2 family. In terms of assembly, monomer.

Its function is as follows. Catalyzes the intermembrane transfer of phosphatidylglycerol and phosphatidylinositol. The protein is Putative phosphatidylglycerol/phosphatidylinositol transfer protein 3 of Dictyostelium discoideum (Social amoeba).